The primary structure comprises 87 residues: Small ribosomal subunit protein bS20 (87 aa).

It belongs to the bacterial ribosomal protein bS20 family.

In terms of biological role, binds directly to 16S ribosomal RNA. This chain is Small ribosomal subunit protein bS20, found in Corynebacterium jeikeium (strain K411).